The sequence spans 88 residues: Period circadian protein (88 aa).

Residues 23 to 88 (VTNTSIAGTG…VTLTESLLNK (66 aa)) form a disordered region. Repeat copies occupy residues 30-31 (GT), 33-34 (GT), 35-36 (GT), 37-38 (GT), 39-40 (GT), 41-42 (GT), 43-44 (GT), 45-46 (GT), 47-48 (GT), 49-50 (GT), 51-52 (GT), 53-54 (GT), 55-56 (GT), 57-58 (GT), 59-60 (GT), and 61-62 (GN). Residues 30–62 (GTGGTGTGTGTGTGTGTGTGTGTGTGTGTGTGN) form a 16 X 2 AA tandem repeats of G-[TN] region. A compositionally biased stretch (gly residues) spans 30–62 (GTGGTGTGTGTGTGTGTGTGTGTGTGTGTGTGN). The span at 79 to 88 (VTLTESLLNK) shows a compositional bias: polar residues.

As to quaternary structure, forms a heterodimer with timeless (TIM); the complex then translocates into the nucleus. In terms of processing, phosphorylated with a circadian rhythmicity, probably by the double-time protein (dbt). Phosphorylation could be implicated in the stability of per monomer and in the formation of heterodimer per-tim.

It is found in the nucleus. The protein localises to the cytoplasm. The protein resides in the perinuclear region. In terms of biological role, essential for biological clock functions. Determines the period length of circadian and ultradian rhythms; an increase in PER dosage leads to shortened circadian rhythms and a decrease leads to lengthened circadian rhythms. Essential for the circadian rhythmicity of locomotor activity, eclosion behavior, and for the rhythmic component of the male courtship song that originates in the thoracic nervous system. The biological cycle depends on the rhythmic formation and nuclear localization of the TIM-PER complex. Light induces the degradation of TIM, which promotes elimination of PER. Nuclear activity of the heterodimer coordinatively regulates PER and TIM transcription through a negative feedback loop. Behaves as a negative element in circadian transcriptional loop. Does not appear to bind DNA, suggesting indirect transcriptional inhibition. In Drosophila teissieri (Fruit fly), this protein is Period circadian protein (per).